A 337-amino-acid chain; its full sequence is Large ribosomal subunit protein uL3 (337 aa).

This sequence belongs to the universal ribosomal protein uL3 family. In terms of assembly, part of the 50S ribosomal subunit. Forms a cluster with proteins L14 and L24e.

Its function is as follows. One of the primary rRNA binding proteins, it binds directly near the 3'-end of the 23S rRNA, where it nucleates assembly of the 50S subunit. The polypeptide is Large ribosomal subunit protein uL3 (Methanosphaerula palustris (strain ATCC BAA-1556 / DSM 19958 / E1-9c)).